Reading from the N-terminus, the 401-residue chain is Histone acetyltransferase type B subunit 2 (401 aa).

5 WD repeats span residues 116–147 (EHEEEITRARYMPQDPNIVATINGQGTVFLYS), 158–189 (FHKDNGYALSFSTLVKGRLLSGSDDHTVALWE), 206–237 (LHSDIINDNKWHNFNKDLFGTVSEDSLLKIND), 249–280 (KCPQPFNTLAFSHHSSNLLAAAGMDSYVYLYD), and 293–324 (GHEDAVNNLEFSTHVDGVVVSSGSDNRLMMWD). Residues 335-339 (DDAED) are interaction with the histone H4 N-terminus. Residues 350–381 (GHRSSVNDFDLNPQIPWLVASAEEENILQVWK) form a WD 6 repeat.

The protein belongs to the WD repeat RBAP46/RBAP48/MSI1 family. As to quaternary structure, component of the HAT-B complex composed of at least HAT1 and HAT2. In the cytoplasm, this complex binds to the histone H4 tail. In the nucleus, the HAT-B complex has an additional component, the histone H3/H4 chaperone HIF1.

The protein localises to the cytoplasm. The protein resides in the nucleus. In terms of biological role, regulatory subunit of the histone acetylase B (HAT-B) complex. The complex acetylates 'Lys-12' of histone H4 which is required for telomeric silencing. HAT2 is required for high affinity binding of the acetyltransferase to histone H4, for the nuclear location of HAT1 and for the HAT1-HIF1 interaction. Alone, it is unable to bind to H4, requiring HAT1 for high affinity interaction with the histone tail. HAT2 also has a HAT1 independent function in life-span regulation. This is Histone acetyltransferase type B subunit 2 (HAT2) from Saccharomyces cerevisiae (strain ATCC 204508 / S288c) (Baker's yeast).